A 222-amino-acid polypeptide reads, in one-letter code: 2-C-methyl-D-erythritol 4-phosphate cytidylyltransferase (222 aa).

It belongs to the IspD/TarI cytidylyltransferase family. IspD subfamily.

It carries out the reaction 2-C-methyl-D-erythritol 4-phosphate + CTP + H(+) = 4-CDP-2-C-methyl-D-erythritol + diphosphate. It participates in isoprenoid biosynthesis; isopentenyl diphosphate biosynthesis via DXP pathway; isopentenyl diphosphate from 1-deoxy-D-xylulose 5-phosphate: step 2/6. In terms of biological role, catalyzes the formation of 4-diphosphocytidyl-2-C-methyl-D-erythritol from CTP and 2-C-methyl-D-erythritol 4-phosphate (MEP). The sequence is that of 2-C-methyl-D-erythritol 4-phosphate cytidylyltransferase from Porphyromonas gingivalis (strain ATCC 33277 / DSM 20709 / CIP 103683 / JCM 12257 / NCTC 11834 / 2561).